A 282-amino-acid chain; its full sequence is Acyl-CoA-binding domain-containing protein 6 (282 aa).

The interval M1–T39 is disordered. S41 carries the phosphoserine modification. An ACB domain is found at L42–P127. Residues Y69–K73 and K95 contribute to the an acyl-CoA site. S106 carries the post-translational modification Phosphoserine. Residue Y114 coordinates an acyl-CoA. 2 ANK repeats span residues E191–C220 and E224–L253.

As to quaternary structure, monomer.

It localises to the cytoplasm. The protein resides in the nucleus. Functionally, binds long-chain acyl-coenzyme A molecules with a strong preference for unsaturated C18:1-CoA, lower affinity for unsaturated C20:4-CoA, and very weak affinity for saturated C16:0-CoA. Does not bind fatty acids. Plays a role in protein N-myristoylation. This chain is Acyl-CoA-binding domain-containing protein 6 (Acbd6), found in Mus musculus (Mouse).